The primary structure comprises 360 residues: POU domain, class 5, transcription factor 1 (360 aa).

Disordered stretches follow at residues 1-50 (MAGH…IGPG) and 87-118 (QGGL…CAAP). The 9aaTAD motif lies at 4-12 (HLASDFAFS). The span at 41–50 (PPGGSGIGPG) shows a compositional bias: gly residues. Phosphoserine; by MAPK is present on S111. K123 participates in a covalent cross-link: Glycyl lysine isopeptide (Lys-Gly) (interchain with G-Cter in SUMO). The 75-residue stretch at 138 to 212 (DIKALQKDLE…LLQKWVEEAD (75 aa)) folds into the POU-specific domain. R157 and Q164 together coordinate DNA. DNA-binding regions lie at residues 180-186 (SQTTICR) and 193-196 (SFKN). Residues 230–289 (RKRKRTSIENRVRGNLESMFLQCPKPTLQQISHIAQQLGLEKDVVRVWFCNRRQKGKRSS) constitute a DNA-binding region (homeobox). T235 bears the Phosphothreonine mark. 3 positions are modified to phosphoserine: S236, S289, and S290. The segment at 287–316 (RSSSDYSQREDFEAAGSPFPGGPVSFPLAP) is disordered. Residues 302–313 (GSPFPGGPVSFP) show a composition bias toward low complexity. S355 is modified (phosphoserine).

Belongs to the POU transcription factor family. Class-5 subfamily. As to quaternary structure, interacts with PKM. Interacts with WWP2. Interacts with UBE2I and ZSCAN10. Interacts with PCGF1. Interacts with ESRRB; recruits ESRRB near the POU5F1-SOX2 element in the NANOG proximal promoter; the interaction is DNA independent. Interacts with ZNF322. Interacts with MAPK8 and MAPK9; the interaction allows MAPK8 and MAPK9 to phosphorylate POU5F1 on Ser-355. Interacts (when phosphorylated on Ser-355) with FBXW8. Interacts with FBXW4. Interacts with SOX2 and SOX15; binds synergistically with either SOX2 or SOX15 to DNA. Interacts with DDX56. Sumoylation enhances the protein stability, DNA binding and transactivation activity. Sumoylation is required for enhanced YES1 expression. In terms of processing, ubiquitinated; undergoes 'Lys-63'-linked polyubiquitination by WWP2 leading to proteasomal degradation. Post-translationally, ERK1/2-mediated phosphorylation at Ser-111 promotes nuclear exclusion and proteasomal degradation. Phosphorylation at Thr-235 and Ser-236 decrease DNA-binding and alters ability to activate transcription.

It localises to the cytoplasm. It is found in the nucleus. Transcription factor that binds to the octamer motif (5'-ATTTGCAT-3'). Forms a trimeric complex with SOX2 or SOX15 on DNA and controls the expression of a number of genes involved in embryonic development such as YES1, FGF4, UTF1 and ZFP206. Critical for early embryogenesis and for embryonic stem cell pluripotency. This is POU domain, class 5, transcription factor 1 (POU5F1) from Sus scrofa (Pig).